The following is a 309-amino-acid chain: Sulfate adenylyltransferase subunit 2 (309 aa).

This sequence belongs to the PAPS reductase family. CysD subfamily. Heterodimer composed of CysD, the smaller subunit, and CysN.

The enzyme catalyses sulfate + ATP + H(+) = adenosine 5'-phosphosulfate + diphosphate. Its pathway is sulfur metabolism; hydrogen sulfide biosynthesis; sulfite from sulfate: step 1/3. Functionally, with CysN forms the ATP sulfurylase (ATPS) that catalyzes the adenylation of sulfate producing adenosine 5'-phosphosulfate (APS) and diphosphate, the first enzymatic step in sulfur assimilation pathway. APS synthesis involves the formation of a high-energy phosphoric-sulfuric acid anhydride bond driven by GTP hydrolysis by CysN coupled to ATP hydrolysis by CysD. The protein is Sulfate adenylyltransferase subunit 2 of Methylorubrum populi (strain ATCC BAA-705 / NCIMB 13946 / BJ001) (Methylobacterium populi).